The chain runs to 399 residues: S-adenosylmethionine synthase (399 aa).

136–141 serves as a coordination point for ATP; sequence GTGSAD.

Belongs to the AdoMet synthase 2 family. Mg(2+) serves as cofactor.

The enzyme catalyses L-methionine + ATP + H2O = S-adenosyl-L-methionine + phosphate + diphosphate. The protein operates within amino-acid biosynthesis; S-adenosyl-L-methionine biosynthesis; S-adenosyl-L-methionine from L-methionine: step 1/1. In terms of biological role, catalyzes the formation of S-adenosylmethionine from methionine and ATP. This Methanothrix thermoacetophila (strain DSM 6194 / JCM 14653 / NBRC 101360 / PT) (Methanosaeta thermophila) protein is S-adenosylmethionine synthase.